A 684-amino-acid polypeptide reads, in one-letter code: Amino-acid acetyltransferase, mitochondrial (684 aa).

The tract at residues Pro-414–Arg-439 is disordered. Over residues Gln-415–Ala-434 the composition is skewed to polar residues. In terms of domain architecture, N-acetyltransferase spans Gly-505–Pro-674.

The protein belongs to the acetyltransferase family.

The protein localises to the mitochondrion. The catalysed reaction is L-glutamate + acetyl-CoA = N-acetyl-L-glutamate + CoA + H(+). The protein operates within amino-acid biosynthesis; L-arginine biosynthesis; N(2)-acetyl-L-ornithine from L-glutamate: step 1/4. In terms of biological role, N-acetylglutamate synthase involved in arginine biosynthesis. In Ajellomyces capsulatus (strain NAm1 / WU24) (Darling's disease fungus), this protein is Amino-acid acetyltransferase, mitochondrial (ARG2).